A 211-amino-acid polypeptide reads, in one-letter code: Transcription factor E (211 aa).

An HTH TFE/IIEalpha-type domain is found at 10 to 130; that stretch reads GNPAIYQYLL…LWLMRMDHMN (121 aa).

This sequence belongs to the TFE family. As to quaternary structure, monomer. Interaction with RNA polymerase subunits RpoF and RpoE is necessary for Tfe stimulatory transcription activity. Able to interact with Tbp and RNA polymerase in the absence of DNA promoter. Interacts both with the preinitiation and elongation complexes.

Functionally, transcription factor that plays a role in the activation of archaeal genes transcribed by RNA polymerase. Facilitates transcription initiation by enhancing TATA-box recognition by TATA-box-binding protein (Tbp), and transcription factor B (Tfb) and RNA polymerase recruitment. Not absolutely required for transcription in vitro, but particularly important in cases where Tbp or Tfb function is not optimal. It dynamically alters the nucleic acid-binding properties of RNA polymerases by stabilizing the initiation complex and destabilizing elongation complexes. Seems to translocate with the RNA polymerase following initiation and acts by binding to the non template strand of the transcription bubble in elongation complexes. In Methanocorpusculum labreanum (strain ATCC 43576 / DSM 4855 / Z), this protein is Transcription factor E.